A 128-amino-acid chain; its full sequence is Large ribosomal subunit protein uL22 (128 aa).

Belongs to the universal ribosomal protein uL22 family. As to quaternary structure, part of the 50S ribosomal subunit.

In terms of biological role, this protein binds specifically to 23S rRNA; its binding is stimulated by other ribosomal proteins, e.g. L4, L17, and L20. It is important during the early stages of 50S assembly. It makes multiple contacts with different domains of the 23S rRNA in the assembled 50S subunit and ribosome. The globular domain of the protein is located near the polypeptide exit tunnel on the outside of the subunit, while an extended beta-hairpin is found that lines the wall of the exit tunnel in the center of the 70S ribosome. The polypeptide is Large ribosomal subunit protein uL22 (Prochlorococcus marinus (strain MIT 9301)).